The primary structure comprises 365 residues: Green-sensitive opsin P521 (365 aa).

The Extracellular segment spans residues 1–51 (MTEAWNVAVFAARRSRDDDDTTRGSVFTYTNTNNTRGPFEGPNYHIAPRWV). A glycan (N-linked (GlcNAc...) asparagine) is linked at Asn33. A helical transmembrane segment spans residues 52–76 (YNLVSFFMIIVVIASCFTNGLVLVA). Over 77–88 (TAKFKKLRHPLN) the chain is Cytoplasmic. Residues 89–113 (WILVNLAFVDLVETLVASTISVFNQ) form a helical membrane-spanning segment. The Extracellular segment spans residues 114-128 (IFGYFILGHPLCVIE). Residues Cys125 and Cys202 are joined by a disulfide bond. Residues 129–148 (GYVVSSCGITGLWSLAIISW) form a helical membrane-spanning segment. Topologically, residues 149–167 (ERWFVVCKPFGNIKFDSKL) are cytoplasmic. Residues 168–191 (AIIGIVFSWVWAWGWSAPPIFGWS) traverse the membrane as a helical segment. Residues 192 to 217 (RYWPHGLKTSCGPDVFSGSVELGCQS) are Extracellular-facing. The chain crosses the membrane as a helical span at residues 218 to 245 (FMLTLMITCCFLPLFIIIVCYLQVWMAI). Topologically, residues 246 to 267 (RAVAAQQKESESTQKAEREVSR) are cytoplasmic. A helical membrane pass occupies residues 268–291 (MVVVMIVAFCICWGPYASFVSFAA). At 292-299 (ANPGYAFH) the chain is on the extracellular side. Residues 300-324 (PLAAALPAYFAKSATIYNPVIYVFM) form a helical membrane-spanning segment. Lys311 carries the N6-(retinylidene)lysine modification. Topologically, residues 325–365 (NRQFRNCIMQLFGKKVDDGSEASTTSRTEVSSVSNSSVAPA) are cytoplasmic. The interval 342-365 (DGSEASTTSRTEVSSVSNSSVAPA) is disordered. Low complexity predominate over residues 345–365 (EASTTSRTEVSSVSNSSVAPA).

Belongs to the G-protein coupled receptor 1 family. Opsin subfamily. In terms of processing, phosphorylated on some or all of the serine and threonine residues present in the C-terminal region. In terms of tissue distribution, in this lizard the color pigments are found in the rod-shaped photoreceptor cells which have been derived from ancestral cone-like photoreceptors.

It localises to the membrane. Its function is as follows. Visual pigments are the light-absorbing molecules that mediate vision. They consist of an apoprotein, opsin, covalently linked to cis-retinal. This Gekko gecko (Tokay gecko) protein is Green-sensitive opsin P521.